The following is a 175-amino-acid chain: uncharacterized protein (175 aa).

Residues Met1 to Ala22 form the signal peptide.

This is an uncharacterized protein from Archaeoglobus fulgidus (strain ATCC 49558 / DSM 4304 / JCM 9628 / NBRC 100126 / VC-16).